The sequence spans 342 residues: tRNA-specific 2-thiouridylase MnmA (342 aa).

ATP contacts are provided by residues 6-13 (LLSGGVDS) and Leu32. Catalysis depends on Cys92, which acts as the Nucleophile. Cys92 and Cys191 form a disulfide bridge. Gly116 is a binding site for ATP. The interval 138–140 (KDQ) is interaction with tRNA. The Cysteine persulfide intermediate role is filled by Cys191. An interaction with tRNA region spans residues 293-294 (RY).

This sequence belongs to the MnmA/TRMU family.

The protein localises to the cytoplasm. The enzyme catalyses S-sulfanyl-L-cysteinyl-[protein] + uridine(34) in tRNA + AH2 + ATP = 2-thiouridine(34) in tRNA + L-cysteinyl-[protein] + A + AMP + diphosphate + H(+). Its function is as follows. Catalyzes the 2-thiolation of uridine at the wobble position (U34) of tRNA, leading to the formation of s(2)U34. The polypeptide is tRNA-specific 2-thiouridylase MnmA (Helicobacter pylori (strain HPAG1)).